The following is a 760-amino-acid chain: Probable 3',5'-cyclic phosphodiesterase pde-6 (760 aa).

2 disordered regions span residues 1–47 and 410–429; these read MGDR…AATA and KRSVVDAHREKRGSHGERRR. Low complexity predominate over residues 33-47; that stretch reads PAARRGAQRAPAATA. Positions 412–429 are enriched in basic and acidic residues; sequence SVVDAHREKRGSHGERRR. Positions 426-750 constitute a PDEase domain; that stretch reads ERRRVSADVK…EKWKVMTSQW (325 aa). The active-site Proton donor is the H502. Residues H506, H542, D543, and D656 each coordinate a divalent metal cation.

Belongs to the cyclic nucleotide phosphodiesterase family. The cofactor is a divalent metal cation.

The enzyme catalyses a nucleoside 3',5'-cyclic phosphate + H2O = a nucleoside 5'-phosphate + H(+). The polypeptide is Probable 3',5'-cyclic phosphodiesterase pde-6 (pde-6) (Caenorhabditis elegans).